We begin with the raw amino-acid sequence, 564 residues long: NAD-dependent malic enzyme (564 aa).

The active-site Proton donor is Tyr-102. Residue Arg-155 coordinates NAD(+). Residue Lys-173 is the Proton acceptor of the active site. A divalent metal cation is bound by residues Glu-244, Asp-245, and Asp-268. Residues Asp-268 and Asn-417 each contribute to the NAD(+) site.

This sequence belongs to the malic enzymes family. As to quaternary structure, homotetramer. Mg(2+) is required as a cofactor. The cofactor is Mn(2+).

The enzyme catalyses (S)-malate + NAD(+) = pyruvate + CO2 + NADH. The catalysed reaction is oxaloacetate + H(+) = pyruvate + CO2. The chain is NAD-dependent malic enzyme from Pseudomonas aeruginosa (strain ATCC 15692 / DSM 22644 / CIP 104116 / JCM 14847 / LMG 12228 / 1C / PRS 101 / PAO1).